A 551-amino-acid polypeptide reads, in one-letter code: Steroid transmembrane transporter SLC22A24 (551 aa).

12 consecutive transmembrane segments (helical) span residues 16 to 36 (FQILHLIFVLICFILVVPHTV), 146 to 166 (SVAKFIYMTGIFIGHLMGGHL), 174 to 194 (FIVTCGLLTLAVTETSVAFAP), 204 to 222 (FLTGISSSCIRTNSALLIL), 235 to 255 (ALIFSAGGIGQVLLGVLAFGI), 260 to 280 (HLQLAMSVPVFFLLIPTRWLS), 350 to 370 (ICLLSFVRCVSLISTVGLLIN), 378 to 398 (VFLLQCLYGVVCTPANLLGNF), 410 to 430 (IIFMSVMGISILSITFLTQEM), 435 to 455 (LVLASLGGAISSASLTSTAVL), 469 to 489 (LGVIGIFGSAGAALSPLLMIL), and 496 to 516 (LPWIIYGVLPILSSLVVLLLP). A disordered region spans residues 524-551 (PDSIQDVENKRKSSREVKKDAVAKVTPF). Positions 530–545 (VENKRKSSREVKKDAV) are enriched in basic and acidic residues.

In terms of tissue distribution, localized to the kidney. Mainly expressed in the late segments of proximal tubules.

Its subcellular location is the cell membrane. The enzyme catalyses estrone 3-sulfate(out) + glutarate(in) = estrone 3-sulfate(in) + glutarate(out). It catalyses the reaction 17beta-estradiol 17-O-(beta-D-glucuronate)(out) + glutarate(in) = 17beta-estradiol 17-O-(beta-D-glucuronate)(in) + glutarate(out). It carries out the reaction dehydroepiandrosterone 3-sulfate(out) + glutarate(in) = dehydroepiandrosterone 3-sulfate(in) + glutarate(out). Functionally, renal transmembrane organic anion/dicarboxylate exchanger that participates in the reabsorption of conjugated steroids, as well as bile acids, driven by an outward gradient of dicarboxylates such as glutarate or succinate. Transports estrone 3-sulfate and estradiol-17-glucuronide (17beta-estradiol 17-O-(beta-D-glucuronate)), but not androstanediol glucuronide (5alpha-androstane-3alpha,17beta-diol 3-O-(beta-D-glucuronate)), nor taurocholate. Prefers sulfate conjugates of steroids rather than glucuronide conjugates. The sequence is that of Steroid transmembrane transporter SLC22A24 from Rattus norvegicus (Rat).